The sequence spans 398 residues: Dual-specificity RNA methyltransferase RlmN (398 aa).

Glutamate 119 functions as the Proton acceptor in the catalytic mechanism. The region spanning 125–364 (EADRATLCVS…TIVRKTRGDD (240 aa)) is the Radical SAM core domain. Cysteine 132 and cysteine 369 are oxidised to a cystine. [4Fe-4S] cluster-binding residues include cysteine 139, cysteine 143, and cysteine 146. S-adenosyl-L-methionine is bound by residues 193 to 194 (GE), serine 225, 247 to 249 (SLH), and asparagine 326. The active-site S-methylcysteine intermediate is the cysteine 369.

It belongs to the radical SAM superfamily. RlmN family. Requires [4Fe-4S] cluster as cofactor.

The protein localises to the cytoplasm. It carries out the reaction adenosine(2503) in 23S rRNA + 2 reduced [2Fe-2S]-[ferredoxin] + 2 S-adenosyl-L-methionine = 2-methyladenosine(2503) in 23S rRNA + 5'-deoxyadenosine + L-methionine + 2 oxidized [2Fe-2S]-[ferredoxin] + S-adenosyl-L-homocysteine. The catalysed reaction is adenosine(37) in tRNA + 2 reduced [2Fe-2S]-[ferredoxin] + 2 S-adenosyl-L-methionine = 2-methyladenosine(37) in tRNA + 5'-deoxyadenosine + L-methionine + 2 oxidized [2Fe-2S]-[ferredoxin] + S-adenosyl-L-homocysteine. In terms of biological role, specifically methylates position 2 of adenine 2503 in 23S rRNA and position 2 of adenine 37 in tRNAs. m2A2503 modification seems to play a crucial role in the proofreading step occurring at the peptidyl transferase center and thus would serve to optimize ribosomal fidelity. The sequence is that of Dual-specificity RNA methyltransferase RlmN from Yersinia pestis.